A 976-amino-acid chain; its full sequence is Dolichyl-phosphooligosaccharide-protein glycotransferase 1 (976 aa).

Residues 1-21 (MVKSKVKKVEKGKEGEEKRST) lie on the Cytoplasmic side of the membrane. A helical membrane pass occupies residues 22–42 (YVLLKKVLIPILVFGFAIYAF). The Extracellular portion of the chain corresponds to 43–112 (YLRHLTAGKY…KVVSLFGYNE (70 aa)). Positions 55-57 (DPD) match the DXD motif 1 motif. A Mn(2+)-binding site is contributed by Asp-57. A helical transmembrane segment spans residues 113–133 (LQAFLLWPPFVGFLGVIAVYL). Topologically, residues 134 to 135 (LG) are cytoplasmic. A helical transmembrane segment spans residues 136–156 (RKVLNEWTGLWGAVVLTVSTA). Over 157–165 (NFSRTFSGN) the chain is Extracellular. A helical transmembrane segment spans residues 166–186 (ARGDGPFMALFIFASVAMLYY). Arg-167 and Asp-169 together coordinate Mn(2+). Residues 167-169 (RGD) carry the DXD motif 2 motif. Topologically, residues 187–193 (LKESNKT) are cytoplasmic. The helical transmembrane segment at 194-214 (RKIIYGTLFVLLTVISLGAWN) threads the bilayer. Position 215 (Gly-215) is a topological domain, extracellular. The helical transmembrane segment at 216–236 (SPFGLMVLLGFASLQTIILFI) threads the bilayer. At 237-247 (FGKLEELKKFV) the chain is on the cytoplasmic side. A helical transmembrane segment spans residues 248-268 (KEFYPAYLAILAFGYALTFPG). Ile-269 is a topological domain (extracellular). The helical transmembrane segment at 270–290 (VKIGGFIRFAFEVFLGLIFLL) threads the bilayer. Residues 291–306 (VIMLYGGRYLNYSDKK) are Cytoplasmic-facing. A helical transmembrane segment spans residues 307-327 (HRFLVVTIIVLLGFGGAYAYV). Residues 328–360 (GPKLFRLMGGAYQSTQVYETVQELAKTTIGDVK) lie on the Extracellular side of the membrane. Positions 347–350 (TVQE) match the TIXE motif motif. A helical transmembrane segment spans residues 361–381 (AYYGVESGNGLIFFLSIPGLL). Residues 382–396 (ILLTKYLYDLFKKAK) lie on the Cytoplasmic side of the membrane. A helical membrane pass occupies residues 397-417 (SDNETLFALVFYTMSLYLLYL). Ala-418 is a topological domain (extracellular). Residues 419–439 (VRFLFLASYAVALFFGIFIGF) form a helical membrane-spanning segment. Arg-420 is an a glycophospholipid binding site. Residues 440-453 (SMDVIEKMKENIGI) lie on the Cytoplasmic side of the membrane. The helical transmembrane segment at 454 to 474 (KAALGIVLSLMILVIPFVHAP) threads the bilayer. Over 475 to 976 (VLARSARALK…SASAPHHSSE (502 aa)) the chain is Extracellular. Residues 513–515 (WWD) form an interacts with target acceptor peptide in protein substrate region. The WWDYG motif motif lies at 513–517 (WWDYG). An a glycophospholipid-binding site is contributed by Tyr-518. A DK motif motif is present at residues 573 to 580 (DWAKFNAI).

It belongs to the STT3 family. Mn(2+) is required as a cofactor. Mg(2+) serves as cofactor.

The protein resides in the cell membrane. The catalysed reaction is an archaeal dolichyl phosphooligosaccharide + [protein]-L-asparagine = an archaeal dolichyl phosphate + a glycoprotein with the oligosaccharide chain attached by N-beta-D-glycosyl linkage to a protein L-asparagine.. It participates in protein modification; protein glycosylation. Oligosaccharyl transferase (OST) that catalyzes the initial transfer of a defined glycan (ManNAcXyl(2)GlcAMan(2)GalNAc in Pyrococcus) from the lipid carrier dolichol-monophosphate to an asparagine residue within an Asn-X-Ser/Thr consensus motif in nascent polypeptide chains, the first step in protein N-glycosylation. In Pyrococcus horikoshii (strain ATCC 700860 / DSM 12428 / JCM 9974 / NBRC 100139 / OT-3), this protein is Dolichyl-phosphooligosaccharide-protein glycotransferase 1 (aglB1).